Consider the following 65-residue polypeptide: uncharacterized protein (65 aa).

2 helical membrane passes run 4-24 and 39-59; these read AWLF…DKVL and LPIP…FIVF.

The protein localises to the membrane. This is an uncharacterized protein from Streptococcus pneumoniae serotype 2 (strain D39 / NCTC 7466).